Here is a 156-residue protein sequence, read N- to C-terminus: Anaerobic ribonucleoside-triphosphate reductase-activating protein (156 aa).

[4Fe-4S] cluster is bound by residues Cys26, Cys30, and Cys33. S-adenosyl-L-methionine is bound by residues 32–34 (GCY) and Gly72.

This sequence belongs to the organic radical-activating enzymes family. Forms a tetramer composed of two NrdD and two NrdG subunits. Requires [4Fe-4S] cluster as cofactor.

It carries out the reaction glycyl-[protein] + reduced [flavodoxin] + S-adenosyl-L-methionine = glycin-2-yl radical-[protein] + semiquinone [flavodoxin] + 5'-deoxyadenosine + L-methionine + H(+). Functionally, activation of anaerobic ribonucleoside-triphosphate reductase under anaerobic conditions by generation of an organic free radical, using S-adenosylmethionine and reduced flavodoxin as cosubstrates to produce 5'-deoxy-adenosine. This chain is Anaerobic ribonucleoside-triphosphate reductase-activating protein (NRDG), found in Escherichia coli (Bacteriophage T4).